A 336-amino-acid chain; its full sequence is Phosphate acyltransferase (336 aa).

This sequence belongs to the PlsX family. Homodimer. Probably interacts with PlsY.

It is found in the cytoplasm. It catalyses the reaction a fatty acyl-[ACP] + phosphate = an acyl phosphate + holo-[ACP]. Its pathway is lipid metabolism; phospholipid metabolism. Functionally, catalyzes the reversible formation of acyl-phosphate (acyl-PO(4)) from acyl-[acyl-carrier-protein] (acyl-ACP). This enzyme utilizes acyl-ACP as fatty acyl donor, but not acyl-CoA. The chain is Phosphate acyltransferase from Pseudomonas aeruginosa (strain UCBPP-PA14).